We begin with the raw amino-acid sequence, 92 residues long: Small ribosomal subunit protein uS19 (92 aa).

It belongs to the universal ribosomal protein uS19 family.

Protein S19 forms a complex with S13 that binds strongly to the 16S ribosomal RNA. This Caulobacter sp. (strain K31) protein is Small ribosomal subunit protein uS19.